The chain runs to 715 residues: Putative pentatricopeptide repeat-containing protein At3g23330 (715 aa).

PPR repeat units lie at residues 38–68, 69–103, 104–138, 139–172, 206–240, 241–275, 276–306, 307–341, 342–376, 377–407, 408–442, 443–473, and 479–509; these read SHTS…LKSP, PVLA…GRCP, DHNV…GMDC, DLYT…MPQR, DVVS…DLKP, DSFT…GIDS, DVYI…LYCR, DGIS…KVKP, GAVA…GFGS, NIFI…MNVL, DEVS…GVKP, NQVA…MTKV, and ELEH…MCVE. The interval 514–589 is type E motif; the sequence is VWSTLLSSCS…KPACSWIEMK (76 aa). Residues 590 to 620 are type E(+) motif; the sequence is NKTHGFVSGDRSHPSMDKINEFLKAVMEQME. The tract at residues 621–715 is type DYW motif; the sequence is KEGYVADTSG…RGNCSCGDYW (95 aa).

Belongs to the PPR family. PCMP-H subfamily.

In Arabidopsis thaliana (Mouse-ear cress), this protein is Putative pentatricopeptide repeat-containing protein At3g23330 (PCMP-H32).